Consider the following 226-residue polypeptide: Oxaloacetate tautomerase FAHD2, mitochondrial (226 aa).

A mitochondrion-targeting transit peptide spans 1 to 30 (MAAAAQRLLAASTKIVGVGRNFVAHAKELG). Positions 69, 71, and 100 each coordinate Mg(2+).

Belongs to the FAH family. Mg(2+) is required as a cofactor. Mn(2+) serves as cofactor.

It is found in the mitochondrion. It catalyses the reaction oxaloacetate = enol-oxaloacetate. Tautomerase that converts enol-oxaloacetate, a strong inhibitor of succinate dehydrogenase, to the physiological keto form of oxaloacetate. This chain is Oxaloacetate tautomerase FAHD2, mitochondrial, found in Oryza sativa subsp. japonica (Rice).